The primary structure comprises 354 residues: Uroporphyrinogen decarboxylase (354 aa).

Residues 27–31, Phe-46, Asp-77, Tyr-153, Thr-208, and His-326 contribute to the substrate site; that span reads RQAGR.

It belongs to the uroporphyrinogen decarboxylase family. Homodimer.

The protein localises to the cytoplasm. The catalysed reaction is uroporphyrinogen III + 4 H(+) = coproporphyrinogen III + 4 CO2. It participates in porphyrin-containing compound metabolism; protoporphyrin-IX biosynthesis; coproporphyrinogen-III from 5-aminolevulinate: step 4/4. Catalyzes the decarboxylation of four acetate groups of uroporphyrinogen-III to yield coproporphyrinogen-III. The sequence is that of Uroporphyrinogen decarboxylase from Neisseria meningitidis serogroup B (strain ATCC BAA-335 / MC58).